The following is a 421-amino-acid chain: Diaminobutyrate--2-oxoglutarate transaminase (421 aa).

The residue at position 267 (lysine 267) is an N6-(pyridoxal phosphate)lysine.

Belongs to the class-III pyridoxal-phosphate-dependent aminotransferase family. In terms of assembly, homohexamer. Requires pyridoxal 5'-phosphate as cofactor.

It carries out the reaction L-2,4-diaminobutanoate + 2-oxoglutarate = L-aspartate 4-semialdehyde + L-glutamate. It participates in amine and polyamine biosynthesis; ectoine biosynthesis; L-ectoine from L-aspartate 4-semialdehyde: step 1/3. Catalyzes reversively the conversion of L-aspartate beta-semialdehyde (ASA) to L-2,4-diaminobutyrate (DABA) by transamination with L-glutamate. Seems to use L-glutamate specifically as the amino group donor to ASA, as it is not active with L-alanine, L-glutamine, L-aspartate and L-lysine, and is only poorly active with L-homoserine. In the reverse reaction, gamma-aminobutyric acid (GABA) and L-ornithine can also be used as amino group donors to 2-oxoglutarate, but with a reduced activity compared to that with DABA. In Halomonas elongata (strain ATCC 33173 / DSM 2581 / NBRC 15536 / NCIMB 2198 / 1H9), this protein is Diaminobutyrate--2-oxoglutarate transaminase (ectB).